A 301-amino-acid chain; its full sequence is Methionyl-tRNA formyltransferase (301 aa).

110 to 113 (SLLP) provides a ligand contact to (6S)-5,6,7,8-tetrahydrofolate.

This sequence belongs to the Fmt family.

The enzyme catalyses L-methionyl-tRNA(fMet) + (6R)-10-formyltetrahydrofolate = N-formyl-L-methionyl-tRNA(fMet) + (6S)-5,6,7,8-tetrahydrofolate + H(+). Its function is as follows. Attaches a formyl group to the free amino group of methionyl-tRNA(fMet). The formyl group appears to play a dual role in the initiator identity of N-formylmethionyl-tRNA by promoting its recognition by IF2 and preventing the misappropriation of this tRNA by the elongation apparatus. This is Methionyl-tRNA formyltransferase from Anaplasma phagocytophilum (strain HZ).